Consider the following 83-residue polypeptide: Mitotic-spindle organizing protein 1 (83 aa).

The protein belongs to the MOZART1 family. In terms of assembly, part of the gamma-tubulin complex.

It is found in the cytoplasm. It localises to the cytoskeleton. The protein resides in the microtubule organizing center. The protein localises to the spindle pole body. Its function is as follows. Required for gamma-tubulin complex recruitment to the microtubule organizing center (MTOC). In Botryotinia fuckeliana (strain B05.10) (Noble rot fungus), this protein is Mitotic-spindle organizing protein 1.